Reading from the N-terminus, the 25-residue chain is Ocellatin-F1 (25 aa).

Leucine 25 is modified (leucine amide).

The protein belongs to the frog skin active peptide (FSAP) family. Ocellatin subfamily. As to expression, expressed by the skin glands.

It localises to the secreted. Functionally, antibacterial peptide that inhibits reference strains of both Gram-negative bacteria (E.coli, P.aeruginosa, E.cloacae, K.pneumoniae, and A.actinomycetemcomitans) and Gram-positive bacteria (S.aureus) with relatively low potencies (MIC=25-400 uM). Shows antifungal activity against C.lusitaniae (MIC=50.25 uM), but no activity against C.albicans. In the presence of an alkaloid (bufotenine), inhibits cellular infection by the rabies virus. The peptide shows very low hemolytic activity against rabbit erythrocytes. The low amphipathicity of alpha-helices demonstrated by wheel projection as well as the low cationicity may explain the low antibacterial and hemolytic potencies. The protein is Ocellatin-F1 of Leptodactylus labyrinthicus (Labyrinth frog).